The sequence spans 108 residues: Ig kappa chain V-V region HP 123E6 (108 aa).

The segment at 1–23 (DIQMTQSTSSLSASLGDRVTISC) is framework-1. Cys-23 and Cys-88 form a disulfide bridge. A complementarity-determining-1 region spans residues 24-34 (RASQDISNYLN). A framework-2 region spans residues 35-49 (WYQQKPDGTVKLLIY). Residues 50 to 56 (YTSRLHS) form a complementarity-determining-2 region. Residues 57–88 (GVPSRFSGSGSGTDYSLTISNLEQEDIATYFC) form a framework-3 region. The interval 89-97 (QQGYMLPRT) is complementarity-determining-3. The interval 98-108 (FGGGTKLEIKR) is framework-4.

This Mus musculus (Mouse) protein is Ig kappa chain V-V region HP 123E6.